A 472-amino-acid polypeptide reads, in one-letter code: Tryptophanase (472 aa).

Lysine 270 is modified (N6-(pyridoxal phosphate)lysine).

This sequence belongs to the beta-eliminating lyase family. In terms of assembly, homotetramer. It depends on pyridoxal 5'-phosphate as a cofactor.

The catalysed reaction is L-tryptophan + H2O = indole + pyruvate + NH4(+). Its pathway is amino-acid degradation; L-tryptophan degradation via pyruvate pathway; indole and pyruvate from L-tryptophan: step 1/1. This is Tryptophanase from Haemophilus influenzae (strain 86-028NP).